The primary structure comprises 117 residues: Small ribosomal subunit protein bS16 (117 aa).

Positions 81 to 90 (LKKRPNRNNP) are enriched in basic residues. Residues 81–117 (LKKRPNRNNPHKGQPGKKAQERISAAKQVAEAESAPV) form a disordered region.

It belongs to the bacterial ribosomal protein bS16 family.

This is Small ribosomal subunit protein bS16 from Bartonella quintana (strain Toulouse) (Rochalimaea quintana).